A 294-amino-acid polypeptide reads, in one-letter code: 4-hydroxy-tetrahydrodipicolinate synthase (294 aa).

T48 contributes to the pyruvate binding site. Residue Y136 is the Proton donor/acceptor of the active site. K164 (schiff-base intermediate with substrate) is an active-site residue. I206 is a pyruvate binding site.

This sequence belongs to the DapA family. Homotetramer; dimer of dimers.

It localises to the cytoplasm. The enzyme catalyses L-aspartate 4-semialdehyde + pyruvate = (2S,4S)-4-hydroxy-2,3,4,5-tetrahydrodipicolinate + H2O + H(+). It participates in amino-acid biosynthesis; L-lysine biosynthesis via DAP pathway; (S)-tetrahydrodipicolinate from L-aspartate: step 3/4. Catalyzes the condensation of (S)-aspartate-beta-semialdehyde [(S)-ASA] and pyruvate to 4-hydroxy-tetrahydrodipicolinate (HTPA). This chain is 4-hydroxy-tetrahydrodipicolinate synthase, found in Phenylobacterium zucineum (strain HLK1).